The primary structure comprises 718 residues: Amino-acid acetyltransferase, mitochondrial (718 aa).

Residues 1-36 (MNPNAVWPRTAQSSLKKHQVSLCTCQRRSHYRLRSF) constitute a mitochondrion transit peptide. Residues 97-116 (QHQPDLPQKPTSAPASTAKI) form a disordered region. One can recognise an N-acetyltransferase domain in the interval 539–708 (RQPRLRLDDP…YEAVCRSIQP (170 aa)).

This sequence belongs to the acetyltransferase family.

Its subcellular location is the mitochondrion. The catalysed reaction is L-glutamate + acetyl-CoA = N-acetyl-L-glutamate + CoA + H(+). Its pathway is amino-acid biosynthesis; L-arginine biosynthesis; N(2)-acetyl-L-ornithine from L-glutamate: step 1/4. Its function is as follows. N-acetylglutamate synthase involved in arginine biosynthesis. The protein is Amino-acid acetyltransferase, mitochondrial (arg2) of Aspergillus clavatus (strain ATCC 1007 / CBS 513.65 / DSM 816 / NCTC 3887 / NRRL 1 / QM 1276 / 107).